A 489-amino-acid polypeptide reads, in one-letter code: Rhamnulokinase (489 aa).

13 to 17 serves as a coordination point for ATP; it reads ASSGR. An intrachain disulfide couples cysteine 68 to cysteine 222. Residues glycine 83 and 236-238 each bind substrate; that span reads HDT. The active-site Proton acceptor is the aspartate 237. Threonine 259 lines the ATP pocket. Asparagine 296 is a binding site for substrate. Glutamine 304 is a binding site for ATP. A disulfide bond links cysteine 353 and cysteine 370. Glycine 402 contacts ATP. Cysteine 413 and cysteine 417 are joined by a disulfide.

This sequence belongs to the rhamnulokinase family. Requires Mg(2+) as cofactor.

It carries out the reaction L-rhamnulose + ATP = L-rhamnulose 1-phosphate + ADP + H(+). Its pathway is carbohydrate degradation; L-rhamnose degradation; glycerone phosphate from L-rhamnose: step 2/3. Involved in the catabolism of L-rhamnose (6-deoxy-L-mannose). Catalyzes the transfer of the gamma-phosphate group from ATP to the 1-hydroxyl group of L-rhamnulose to yield L-rhamnulose 1-phosphate. This chain is Rhamnulokinase, found in Salmonella typhimurium (strain LT2 / SGSC1412 / ATCC 700720).